A 734-amino-acid chain; its full sequence is Threonine--tRNA ligase, cytoplasmic (734 aa).

The tract at residues 1–41 (MSASEAGVTEQVKKLSVKDSSNDAVKPNKKENKKSKQQSLY) is disordered. A compositionally biased stretch (basic and acidic residues) spans 11–30 (QVKKLSVKDSSNDAVKPNKK). In terms of domain architecture, TGS spans 69-135 (SMPRVPLKIV…EGEANEEIKL (67 aa)). Phosphoserine occurs at positions 195 and 289. Residues Thr-297 and Thr-381 each carry the phosphothreonine modification. 2 positions are modified to phosphoserine: Ser-453 and Ser-457. Thr-460 is subject to Phosphothreonine. Residue Ser-605 is modified to Phosphoserine.

This sequence belongs to the class-II aminoacyl-tRNA synthetase family.

The protein localises to the cytoplasm. It catalyses the reaction tRNA(Thr) + L-threonine + ATP = L-threonyl-tRNA(Thr) + AMP + diphosphate + H(+). The chain is Threonine--tRNA ligase, cytoplasmic (THS1) from Saccharomyces cerevisiae (strain ATCC 204508 / S288c) (Baker's yeast).